Here is a 91-residue protein sequence, read N- to C-terminus: MSVKIRLKRMGSKKRPFYRIVVADSRSPRDGRFITSLGTYNPLTTPKQVKFDEDAVMEWLQKGAQPSDTVRNMLQKAGVMKKYHEAKYAKK.

Belongs to the bacterial ribosomal protein bS16 family.

The sequence is that of Small ribosomal subunit protein bS16 from Limosilactobacillus fermentum (strain NBRC 3956 / LMG 18251) (Lactobacillus fermentum).